The sequence spans 430 residues: Enolase (430 aa).

Gln-163 contributes to the (2R)-2-phosphoglycerate binding site. Catalysis depends on Glu-205, which acts as the Proton donor. Mg(2+)-binding residues include Asp-242, Glu-287, and Asp-314. The (2R)-2-phosphoglycerate site is built by Lys-339, Arg-368, Ser-369, and Lys-390. The active-site Proton acceptor is the Lys-339.

This sequence belongs to the enolase family. It depends on Mg(2+) as a cofactor.

Its subcellular location is the cytoplasm. It is found in the secreted. The protein resides in the cell surface. It catalyses the reaction (2R)-2-phosphoglycerate = phosphoenolpyruvate + H2O. The protein operates within carbohydrate degradation; glycolysis; pyruvate from D-glyceraldehyde 3-phosphate: step 4/5. In terms of biological role, catalyzes the reversible conversion of 2-phosphoglycerate (2-PG) into phosphoenolpyruvate (PEP). It is essential for the degradation of carbohydrates via glycolysis. In Listeria innocua serovar 6a (strain ATCC BAA-680 / CLIP 11262), this protein is Enolase.